Here is a 260-residue protein sequence, read N- to C-terminus: MKTNGHFKDFAWKKCLLGASVGALLVGCSPHIIETNEVALKLNYHPASEKVQALDEKILLLRPAFQYSDNIAKEYENKFKNQTVLKVEQILQNQGYKVINVDSSDKDDFSFAQKKEGYLAVAMNGEIVLRPDPKRTIQKKSEPGLLFSTGLDKMEGVLIPAGFVKVTILEPMSGESLDSFTMDLSELDIQEKFLKTTHSSHSGGLVSTMVKGTDNSNDAIKSALNKIFGSIMQEIDKKLTQKNLESYQKDAKELKGKRNR.

A signal peptide spans M1–G27. Residue C28 is the site of N-palmitoyl cysteine attachment. C28 is lipidated: S-diacylglycerol cysteine. An N-acetyl-neuraminyl-alpha(2,3)-lactose binding motif region spans residues K134 to K139.

The protein localises to the cell outer membrane. This is Neuraminyllactose-binding hemagglutinin (hpaA) from Helicobacter pylori (Campylobacter pylori).